A 102-amino-acid chain; its full sequence is Citrate lyase acyl carrier protein (102 aa).

Position 14 is an O-(phosphoribosyl dephospho-coenzyme A)serine (serine 14).

Belongs to the CitD family. In terms of assembly, oligomer with a subunit composition of (alpha,beta,gamma)6.

Its subcellular location is the cytoplasm. Functionally, covalent carrier of the coenzyme of citrate lyase. In Streptococcus equi subsp. equi (strain 4047), this protein is Citrate lyase acyl carrier protein.